The chain runs to 1207 residues: DNA-directed RNA polymerase subunit beta' (1207 aa).

Zn(2+) is bound by residues C60, C62, C75, and C78. D449, D451, and D453 together coordinate Mg(2+). Positions 822, 896, 903, and 906 each coordinate Zn(2+).

The protein belongs to the RNA polymerase beta' chain family. The RNAP catalytic core consists of 2 alpha, 1 beta, 1 beta' and 1 omega subunit. When a sigma factor is associated with the core the holoenzyme is formed, which can initiate transcription. The cofactor is Mg(2+). Zn(2+) serves as cofactor.

It carries out the reaction RNA(n) + a ribonucleoside 5'-triphosphate = RNA(n+1) + diphosphate. Functionally, DNA-dependent RNA polymerase catalyzes the transcription of DNA into RNA using the four ribonucleoside triphosphates as substrates. This is DNA-directed RNA polymerase subunit beta' from Staphylococcus aureus (strain MRSA252).